The following is a 502-amino-acid chain: Maturase K (502 aa).

Belongs to the intron maturase 2 family. MatK subfamily.

The protein resides in the plastid. It localises to the chloroplast. Usually encoded in the trnK tRNA gene intron. Probably assists in splicing its own and other chloroplast group II introns. This chain is Maturase K, found in Ehretia anacua (Sandpaper tree).